A 373-amino-acid chain; its full sequence is DNA primase small subunit PriS (373 aa).

Active-site residues include Asp95, Asp97, and Asp281.

Belongs to the eukaryotic-type primase small subunit family. In terms of assembly, heterodimer of a small subunit (PriS) and a large subunit (PriL). Requires Mg(2+) as cofactor. The cofactor is Mn(2+).

In terms of biological role, catalytic subunit of DNA primase, an RNA polymerase that catalyzes the synthesis of short RNA molecules used as primers for DNA polymerase during DNA replication. The small subunit contains the primase catalytic core and has DNA synthesis activity on its own. Binding to the large subunit stabilizes and modulates the activity, increasing the rate of DNA synthesis while decreasing the length of the DNA fragments, and conferring RNA synthesis capability. The DNA polymerase activity may enable DNA primase to also catalyze primer extension after primer synthesis. May also play a role in DNA repair. The sequence is that of DNA primase small subunit PriS from Nitrosopumilus maritimus (strain SCM1).